The chain runs to 195 residues: Calcineurin B homologous protein 1 (195 aa).

The N-myristoyl glycine moiety is linked to residue glycine 2. The short motif at 2–6 (GSRAS) is the Necessary for association with microtubule and interaction with GAPDH element. 4 EF-hand domains span residues 26–61 (SQIT…AINP), 71–106 (FSEG…NGPE), 110–145 (SRSN…MVGV), and 151–186 (QLGS…VDVE). The Ca(2+) site is built by aspartate 123, aspartate 125, aspartate 127, lysine 129, and glutamate 134. The Nuclear export signal 1 motif lies at 138 to 147 (VLRMMVGVNI). Ca(2+) contacts are provided by aspartate 164, aspartate 166, aspartate 168, and glutamate 175. Positions 176 to 185 (FVKVLEKVDV) match the Nuclear export signal 2 motif.

The protein belongs to the calcineurin regulatory subunit family. CHP subfamily. In terms of assembly, monomer. Interacts with STK17B; the interaction occurs in a calcium-independent manner and induces the translocation of CHP1 from the Golgi to the nucleus. Interacts with GAPDH; the interaction is direct, occurs in a N-myristoylation-dependent manner and facilitates the ability of CHP1 to bind microtubules. Interacts with KIF1B (via the C-terminal end of the kinesin-motor domain); the interaction occurs in a calcium-dependent manner. Associates (via C-terminal domain) with microtubules; the association occurs with polymerized microtubules during the cell cycle in a myristoylation- and calcium-independent manner and is enhanced by GAPDH. Interacts with PPP3CA. Interacts with SLC9A1/NHE1 (via the cytoplasmic C-terminal domain); the interaction occurs at the plasma membrane in a calcium-dependent manner and at a domain that is critical for growth factor stimulation of the exchanger. Interacts with SLC9A3; increases SLC9A3 trafficking and activity at the plasma membrane. In terms of processing, phosphorylated; decreased phosphorylation is associated with an increase in SLC9A1/NHE1 Na(+)/H(+) exchange activity. Phosphorylation occurs in serum-dependent manner. The phosphorylation state may regulate the binding to SLC9A1/NHE1. Both N-myristoylation and calcium-mediated conformational changes are essential for its function in exocytic traffic. N-myristoylation is required for its association with microtubules and interaction with GAPDH, but not for the constitutive association to membranes.

Its subcellular location is the nucleus. It localises to the cytoplasm. The protein resides in the cytoskeleton. It is found in the endomembrane system. The protein localises to the endoplasmic reticulum-Golgi intermediate compartment. Its subcellular location is the endoplasmic reticulum. It localises to the cell membrane. The protein resides in the membrane. Functionally, calcium-binding protein involved in different processes such as regulation of vesicular trafficking, plasma membrane Na(+)/H(+) exchanger and gene transcription. Involved in the constitutive exocytic membrane traffic. Mediates the association between microtubules and membrane-bound organelles of the endoplasmic reticulum and Golgi apparatus and is also required for the targeting and fusion of transcytotic vesicles (TCV) with the plasma membrane. Functions as an integral cofactor in cell pH regulation by controlling plasma membrane-type Na(+)/H(+) exchange activity. Affects the pH sensitivity of SLC9A1/NHE1 by increasing its sensitivity at acidic pH. Required for the stabilization and localization of SLC9A1/NHE1 at the plasma membranes. Inhibits serum- and GTPase-stimulated Na(+)/H(+) exchange. Plays a role as an inhibitor of ribosomal RNA transcription by repressing the nucleolar UBF1 transcriptional activity. May sequester UBF1 in the nucleoplasm and limit its translocation to the nucleolus. Associates to the ribosomal gene promoter. Acts as a negative regulator of the calcineurin/NFAT signaling pathway. Inhibits NFAT nuclear translocation and transcriptional activity by suppressing the calcium-dependent calcineurin phosphatase activity. Also negatively regulates the kinase activity of the apoptosis-induced kinase STK17B. Inhibits both STK17B auto- and substrate-phosphorylations in a calcium-dependent manner. This is Calcineurin B homologous protein 1 (Chp1) from Mus musculus (Mouse).